The primary structure comprises 420 residues: Glutamyl-tRNA reductase (420 aa).

Substrate contacts are provided by residues 49–52 (TCNR), Ser109, 114–116 (EPQ), and Gln120. The Nucleophile role is filled by Cys50. 189–194 (GAGETI) is a binding site for NADP(+).

It belongs to the glutamyl-tRNA reductase family. Homodimer.

It catalyses the reaction (S)-4-amino-5-oxopentanoate + tRNA(Glu) + NADP(+) = L-glutamyl-tRNA(Glu) + NADPH + H(+). It functions in the pathway porphyrin-containing compound metabolism; protoporphyrin-IX biosynthesis; 5-aminolevulinate from L-glutamyl-tRNA(Glu): step 1/2. Catalyzes the NADPH-dependent reduction of glutamyl-tRNA(Glu) to glutamate 1-semialdehyde (GSA). This Photorhabdus laumondii subsp. laumondii (strain DSM 15139 / CIP 105565 / TT01) (Photorhabdus luminescens subsp. laumondii) protein is Glutamyl-tRNA reductase.